A 526-amino-acid chain; its full sequence is ATP synthase subunit alpha (526 aa).

171 to 178 (GDRQTGKT) serves as a coordination point for ATP.

This sequence belongs to the ATPase alpha/beta chains family. F-type ATPases have 2 components, CF(1) - the catalytic core - and CF(0) - the membrane proton channel. CF(1) has five subunits: alpha(3), beta(3), gamma(1), delta(1), epsilon(1). CF(0) has four main subunits: a(1), b(1), b'(1) and c(9-12).

It localises to the cell inner membrane. It catalyses the reaction ATP + H2O + 4 H(+)(in) = ADP + phosphate + 5 H(+)(out). Functionally, produces ATP from ADP in the presence of a proton gradient across the membrane. The alpha chain is a regulatory subunit. In Chlorobium phaeovibrioides (strain DSM 265 / 1930) (Prosthecochloris vibrioformis (strain DSM 265)), this protein is ATP synthase subunit alpha.